Reading from the N-terminus, the 90-residue chain is Small ribosomal subunit protein bS18 (90 aa).

Belongs to the bacterial ribosomal protein bS18 family. As to quaternary structure, part of the 30S ribosomal subunit. Forms a tight heterodimer with protein bS6.

Binds as a heterodimer with protein bS6 to the central domain of the 16S rRNA, where it helps stabilize the platform of the 30S subunit. The sequence is that of Small ribosomal subunit protein bS18 from Bordetella petrii (strain ATCC BAA-461 / DSM 12804 / CCUG 43448).